A 444-amino-acid chain; its full sequence is N-succinylarginine dihydrolase (444 aa).

Substrate contacts are provided by residues Ser19 to Ser28, Asn110, and His137 to Arg138. The active site involves Glu174. Arg214 provides a ligand contact to substrate. His250 is an active-site residue. Asp252 and Asn362 together coordinate substrate. Cys368 acts as the Nucleophile in catalysis.

The protein belongs to the succinylarginine dihydrolase family. In terms of assembly, homodimer.

It catalyses the reaction N(2)-succinyl-L-arginine + 2 H2O + 2 H(+) = N(2)-succinyl-L-ornithine + 2 NH4(+) + CO2. The protein operates within amino-acid degradation; L-arginine degradation via AST pathway; L-glutamate and succinate from L-arginine: step 2/5. Catalyzes the hydrolysis of N(2)-succinylarginine into N(2)-succinylornithine, ammonia and CO(2). This Aliivibrio fischeri (strain ATCC 700601 / ES114) (Vibrio fischeri) protein is N-succinylarginine dihydrolase.